The primary structure comprises 804 residues: uncharacterized protein (804 aa).

10 helical membrane passes run 15-35 (LLIV…LGNI), 243-263 (FLLL…AVAM), 301-321 (LSAV…MVLL), 333-353 (SLWP…LVGL), 381-401 (FYLP…MGGS), 403-423 (LLWA…VLGW), 453-473 (TLSQ…LLVL), 680-700 (ALEV…LAQV), 734-754 (MLGF…LAVL), and 769-789 (LWIV…GWLG).

Belongs to the ABC-4 integral membrane protein family.

The protein resides in the cell membrane. This is an uncharacterized protein from Escherichia coli (strain K12).